Here is a 586-residue protein sequence, read N- to C-terminus: ATPase family AAA domain-containing protein 3A (586 aa).

Disordered regions lie at residues 1–55 (MSWL…PTGL) and 111–134 (QAEERRKTLSEETRQHQARAQYQD). S2 carries the N-acetylserine modification. Positions 2–50 (SWLFGINKGPKGEGAGPPPPLPPAQPGAEGGGDRGLGDRPAPKDKWSNF) are required for interaction with the inner surface of the mitochondrial outer membrane. Over 2–246 (SWLFGINKGP…FRAFVTDWDK (245 aa)) the chain is Mitochondrial intermembrane. Over residues 17-26 (GPPPPLPPAQ) the composition is skewed to pro residues. Composition is skewed to basic and acidic residues over residues 32–48 (GGDRGLGDRPAPKDKWS) and 111–125 (QAEERRKTLSEETRQ). A coiled-coil region spans residues 86–219 (QLEQQSKLKE…QIRLKAAEHR (134 aa)). Residues 247-264 (VTATVAGLTLLAVGVYSA) traverse the membrane as a helical segment. Residues 265-586 (KNATLVAGRF…PGRGDEPSPS (322 aa)) lie on the Mitochondrial matrix side of the membrane. The tract at residues 290–305 (RITVLEALRHPIQVSR) is S100B-binding. S321 is modified (phosphoserine). 352–359 (GPPGTGKT) lines the ATP pocket. K491 is modified (N6-acetyllysine).

The protein belongs to the AAA ATPase family. In terms of assembly, can form homooligomers. Homodimer formation at the N-terminus may be regulated by ATP and is required for the interaction with the inner surface of the mitochondrial outer membrane and correct mitochondrial homeostasis. Interacts with components of the mitochondrial ribosome and with other proteins involved in mitochondrial RNA metabolism. May also interact with protein involved in lipid metabolism, including STARD9. May interact with FAM210A. Interacts with GADD45GIP1. Interacts with S100B in a Ca(+2)- and Zn(+2)-dependent manner; this interaction probably occurs in the cytosol prior to mitochondrial targeting. S100B could assist ATAD3A cytoplasmic processing, preventing aggregation and favoring mitochondrial localization. Interacts with HSP60/HSPD1. Forms heterooligomers with ATAD3B; this interaction may affect ATAD3A activity. Interacts with CLPB. Interacts with EIF2AK3/PERK; ATAD3A and EIF2S1/eIF-2-alpha occupy a common binding site within the cytoplasmic loop of EIF2AK3/PERK, leading to prevent EIF2AK3/PERK association with its substrate EIF2S1/eIF-2-alpha. In terms of tissue distribution, overexpressed in lung adenocarcinomas (at protein level).

The protein localises to the mitochondrion inner membrane. Its subcellular location is the mitochondrion matrix. The protein resides in the mitochondrion nucleoid. The catalysed reaction is ATP + H2O = ADP + phosphate + H(+). Essential for mitochondrial network organization, mitochondrial metabolism and cell growth at organism and cellular level. May play an important role in mitochondrial protein synthesis. May also participate in mitochondrial DNA replication. May bind to mitochondrial DNA D-loops and contribute to nucleoid stability. Required for enhanced channeling of cholesterol for hormone-dependent steroidogenesis. Involved in mitochondrial-mediated antiviral innate immunity. Required to protect mitochondria from the PERK-mediated unfolded protein response: specifically inhibits the activity of EIF2AK3/PERK at mitochondria-endoplasmic reticulum contact sites, thereby providing a safe haven for mitochondrial protein translation during endoplasmic reticulum stress. Ability to inhibit EIF2AK3/PERK is independent of its ATPase activity. Also involved in the mitochondrial DNA damage response by promoting signaling between damaged genomes and the mitochondrial membrane, leading to activation of the integrated stress response (ISR). In Homo sapiens (Human), this protein is ATPase family AAA domain-containing protein 3A.